The chain runs to 236 residues: MTVTADPVTLMKQEVGKAAAALVKSGSIVGLGTGSTTAYTIQYLGDRLKSGELTDIVGIPTSFQSEVLSKQYGVPLTTLDAVDHIDIAIDGADEVDPQKNLIKGGGAAHTREKVVDYLANQFIVVVDSGKLVDRLGSVFAVPVEVIPMAITPVTNAIKQLGGKPELRMGVKKAGPVITDQGNFVLDVRFDSIDDPVNLEKILNNIPGVLENGIFVNCADIVLVGEVKDGQPLVRQL.

Residues 33-36, 90-93, and 103-106 each bind substrate; these read TGST, DGAD, and KGGG. Catalysis depends on E112, which acts as the Proton acceptor. K130 is a substrate binding site.

The protein belongs to the ribose 5-phosphate isomerase family. In terms of assembly, homodimer.

The catalysed reaction is aldehydo-D-ribose 5-phosphate = D-ribulose 5-phosphate. It functions in the pathway carbohydrate degradation; pentose phosphate pathway; D-ribose 5-phosphate from D-ribulose 5-phosphate (non-oxidative stage): step 1/1. Its function is as follows. Catalyzes the reversible conversion of ribose-5-phosphate to ribulose 5-phosphate. The sequence is that of Ribose-5-phosphate isomerase A from Trichormus variabilis (strain ATCC 29413 / PCC 7937) (Anabaena variabilis).